A 323-amino-acid chain; its full sequence is Fructose-1,6-bisphosphatase class 1 (323 aa).

Mg(2+) is bound by residues glutamate 88, aspartate 107, leucine 109, and aspartate 110. Residues 110 to 113 (DGSS) and asparagine 200 each bind substrate. Glutamate 272 lines the Mg(2+) pocket.

This sequence belongs to the FBPase class 1 family. In terms of assembly, homotetramer. It depends on Mg(2+) as a cofactor.

It is found in the cytoplasm. It carries out the reaction beta-D-fructose 1,6-bisphosphate + H2O = beta-D-fructose 6-phosphate + phosphate. The protein operates within carbohydrate biosynthesis; gluconeogenesis. This Acinetobacter baumannii (strain ACICU) protein is Fructose-1,6-bisphosphatase class 1.